Consider the following 282-residue polypeptide: Nucleotide-binding protein Shew_3314 (282 aa).

8 to 15 (GRSGSGKS) contributes to the ATP binding site. 56-59 (DVRN) contributes to the GTP binding site.

It belongs to the RapZ-like family.

In terms of biological role, displays ATPase and GTPase activities. This chain is Nucleotide-binding protein Shew_3314, found in Shewanella loihica (strain ATCC BAA-1088 / PV-4).